Here is a 422-residue protein sequence, read N- to C-terminus: UDP-N-acetylglucosamine 1-carboxyvinyltransferase (422 aa).

Residue 22–23 participates in phosphoenolpyruvate binding; it reads KN. UDP-N-acetyl-alpha-D-glucosamine is bound at residue Arg95. The active-site Proton donor is the Cys119. Residue Cys119 is modified to 2-(S-cysteinyl)pyruvic acid O-phosphothioketal. UDP-N-acetyl-alpha-D-glucosamine is bound by residues 124–128, Asp309, and Val331; that span reads RPIDQ.

It belongs to the EPSP synthase family. MurA subfamily.

It is found in the cytoplasm. The enzyme catalyses phosphoenolpyruvate + UDP-N-acetyl-alpha-D-glucosamine = UDP-N-acetyl-3-O-(1-carboxyvinyl)-alpha-D-glucosamine + phosphate. It participates in cell wall biogenesis; peptidoglycan biosynthesis. Cell wall formation. Adds enolpyruvyl to UDP-N-acetylglucosamine. This is UDP-N-acetylglucosamine 1-carboxyvinyltransferase from Anaeromyxobacter sp. (strain K).